Consider the following 282-residue polypeptide: Acetylglutamate kinase (282 aa).

Residues 62–63 (GG), R84, and N178 contribute to the substrate site.

Belongs to the acetylglutamate kinase family. ArgB subfamily.

It is found in the cytoplasm. It catalyses the reaction N-acetyl-L-glutamate + ATP = N-acetyl-L-glutamyl 5-phosphate + ADP. It functions in the pathway amino-acid biosynthesis; L-arginine biosynthesis; N(2)-acetyl-L-ornithine from L-glutamate: step 2/4. Its function is as follows. Catalyzes the ATP-dependent phosphorylation of N-acetyl-L-glutamate. This is Acetylglutamate kinase from Kosmotoga olearia (strain ATCC BAA-1733 / DSM 21960 / TBF 19.5.1).